The chain runs to 328 residues: Phosphate acyltransferase (328 aa).

The protein belongs to the PlsX family. In terms of assembly, homodimer. Probably interacts with PlsY.

The protein resides in the cytoplasm. It catalyses the reaction a fatty acyl-[ACP] + phosphate = an acyl phosphate + holo-[ACP]. Its pathway is lipid metabolism; phospholipid metabolism. In terms of biological role, catalyzes the reversible formation of acyl-phosphate (acyl-PO(4)) from acyl-[acyl-carrier-protein] (acyl-ACP). This enzyme utilizes acyl-ACP as fatty acyl donor, but not acyl-CoA. This Staphylococcus saprophyticus subsp. saprophyticus (strain ATCC 15305 / DSM 20229 / NCIMB 8711 / NCTC 7292 / S-41) protein is Phosphate acyltransferase.